A 248-amino-acid polypeptide reads, in one-letter code: Probable phosphatase VFMJ11_A0899 (248 aa).

The Zn(2+) site is built by histidine 8, histidine 10, histidine 16, histidine 41, glutamate 74, histidine 101, histidine 131, aspartate 193, and histidine 195.

It belongs to the PHP family. Zn(2+) is required as a cofactor.

In Aliivibrio fischeri (strain MJ11) (Vibrio fischeri), this protein is Probable phosphatase VFMJ11_A0899.